The following is a 248-amino-acid chain: NH(3)-dependent NAD(+) synthetase (248 aa).

31–38 (GVSGGVDS) provides a ligand contact to ATP. Aspartate 37 is a Mg(2+) binding site. Arginine 114 is a binding site for deamido-NAD(+). ATP is bound at residue threonine 134. Residue glutamate 139 participates in Mg(2+) binding. Positions 147 and 154 each coordinate deamido-NAD(+). Residues lysine 163 and serine 185 each contribute to the ATP site. Residue 236–237 (HK) coordinates deamido-NAD(+).

It belongs to the NAD synthetase family. As to quaternary structure, homodimer.

The catalysed reaction is deamido-NAD(+) + NH4(+) + ATP = AMP + diphosphate + NAD(+) + H(+). Its pathway is cofactor biosynthesis; NAD(+) biosynthesis; NAD(+) from deamido-NAD(+) (ammonia route): step 1/1. Its function is as follows. Catalyzes the ATP-dependent amidation of deamido-NAD to form NAD. Uses ammonia as a nitrogen source. In Methanoregula boonei (strain DSM 21154 / JCM 14090 / 6A8), this protein is NH(3)-dependent NAD(+) synthetase.